Here is a 576-residue protein sequence, read N- to C-terminus: Pentatricopeptide repeat-containing protein At1g79080, chloroplastic (576 aa).

Residues methionine 1 to serine 37 constitute a chloroplast transit peptide. PPR repeat units lie at residues asparagine 105 to proline 139, aspartate 140 to serine 174, asparagine 175 to proline 209, asparagine 210 to proline 244, asparagine 245 to alanine 279, asparagine 280 to proline 314, serine 315 to phenylalanine 349, threonine 352 to proline 386, asparagine 387 to lysine 417, threonine 422 to proline 456, aspartate 457 to serine 487, threonine 493 to proline 527, and asparagine 528 to glycine 562.

The protein belongs to the PPR family. P subfamily.

The protein localises to the plastid. It is found in the chloroplast. This chain is Pentatricopeptide repeat-containing protein At1g79080, chloroplastic, found in Arabidopsis thaliana (Mouse-ear cress).